A 454-amino-acid chain; its full sequence is Chromosomal replication initiator protein DnaA (454 aa).

A domain I, interacts with DnaA modulators region spans residues 1-76 (MNKLKTDLNL…IGASFRILAK (76 aa)). A domain II region spans residues 76-113 (KNPKIIFAQESPGNGEKATGKKIKSLPREDKSSIFESK). The segment at 114 to 330 (GLNTKFSFEN…GALNRLCAYA (217 aa)) is domain III, AAA+ region. ATP is bound by residues Gly-158, Gly-160, Lys-161, and Thr-162. The interval 331–454 (SIHKEGKITL…KITEQLTSSQ (124 aa)) is domain IV, binds dsDNA.

This sequence belongs to the DnaA family. Oligomerizes as a right-handed, spiral filament on DNA at oriC.

Its subcellular location is the cytoplasm. Its function is as follows. Plays an essential role in the initiation and regulation of chromosomal replication. ATP-DnaA binds to the origin of replication (oriC) to initiate formation of the DNA replication initiation complex once per cell cycle. Binds the DnaA box (a 9 base pair repeat at the origin) and separates the double-stranded (ds)DNA. Forms a right-handed helical filament on oriC DNA; dsDNA binds to the exterior of the filament while single-stranded (ss)DNA is stabiized in the filament's interior. The ATP-DnaA-oriC complex binds and stabilizes one strand of the AT-rich DNA unwinding element (DUE), permitting loading of DNA polymerase. After initiation quickly degrades to an ADP-DnaA complex that is not apt for DNA replication. Binds acidic phospholipids. The sequence is that of Chromosomal replication initiator protein DnaA from Methylacidiphilum infernorum (isolate V4) (Methylokorus infernorum (strain V4)).